The primary structure comprises 1040 residues: MGEEGGSVSHDEEERASVLLGHSLGCEMCSQEAFQAQRSQLVELLVSGSLEGFESVLDWLLSWEVLSWEDYEGFHLLGQPLSHLARRLLDTVWNKGTWACQKLIAAAQEAQADSQSPKLHGCWDPHSLHPARDLQSHRPAIVRRLHNHVENMLDLAWERGFVSQYECDEIRLPIFTPSQRARRLLDLATVKANGLAAFLLQHVQELPVPLALPLEAATCKKYMAKLRTTVSAQSRFLSTYDGAETLCLEDIYTENVLEVWADVGMAGPPQKSPATLGLEELFSTPGHLNDDADTVLVVGEAGSGKSTLLQRLHLLWAAGRDFQEFLFVFPFSCRQLQCMAKPLSVRTLLFEHCCWPDVGQEDIFQLLLDHPDRVLLTFDGFDEFKFRFTDRERHCSPTDPTSVQTLLFNLLQGNLLKNARKVVTSRPAAVSAFLRKYIRTEFNLKGFSEQGIELYLRKRHREPGVADRLIRLLQATSALHGLCHLPVFSWMVSKCHQELLLQEGGSPKTTTDMYLLILQHFLLHATPPDSASQGLGPSLLRGRLPTLLHLGRLALWGLGMCCYVFSAQQLQAAQVSPDDISLGFLVRAKGVVPGSTAPLEFLHITFQCFFAAFYLALSADVPPALLRHLFNCGRPGNSPMARLLPTMCIQGSEGKDSSVAALLQKAEPHNLQITAAFLAGLLSREHWGLLAECQTSEKALLRRQACARWCLARSLRKHFHSIPPAAPGEAKSVHAMPGFIWLIRSLYEMQEERLARKAARGLNVGHLKLTFCSVGPAECAALAFVLQHLRRPVALQLDYNSVGDIGVEQLLPCLGVCKALYLRDNNISDRGICKLIECALHCEQLQKLALFNNKLTDGCAHSMAKLLACRQNFLALRLGNNYITAAGAQVLAQGLRGNTSLQFLGFWGNRVGDEGAQALAEALGDHQSLRWLSLVGNNIGSVGAQALALMLAKNVMLEELCLEENHLQDEGVCSLAEGLKKNSSLKILKLSNNCITYLGAEALLQALERNDTILEVWLRGNTFSLEEVDKLGCRDTRLLL.

CARD domains follow at residues 26-122 (CEMC…LHGC) and 126-218 (HSLH…EAAT). The ATG16L1-binding motif motif lies at 63–77 (WEVLSWEDYEGFHLL). Residues Thr-239, Tyr-252, Thr-253, Gly-302, Ser-303, Gly-304, Lys-305, Ser-306, and Thr-307 each coordinate ADP. The required for CARD9 binding stretch occupies residues 241 to 274 (DGAETLCLEDIYTENVLEVWADVGMAGPPQKSPA). Positions 293 to 618 (DTVLVVGEAG…FFAAFYLALS (326 aa)) constitute an NACHT domain. 299–306 (GEAGSGKS) is an ATP binding site. A lipid anchor (S-palmitoyl cysteine) is attached at Cys-395. His-603 serves as a coordination point for ADP. LRR repeat units follow at residues 791–812 (RPVALQLDYNSVGDIGVEQLLP), 816–839 (VCKALYLRDNNISDRGICKLIECA), 844–865 (QLQKLALFNNKLTDGCAHSMAK), 872–884 (NFLALRLGNNYIT), 900–920 (SLQFLGFWGNRVGDEGAQALA), 928–949 (SLRWLSLVGNNIGSVGAQALAL), 956–976 (MLEELCLEENHLQDEGVCSLA), 984–1005 (SLKILKLSNNCITYLGAEALLQ), and 1012–1032 (TILEVWLRGNTFSLEEVDKLG). The S-palmitoyl cysteine moiety is linked to residue Cys-1033.

This sequence belongs to the NOD1-NOD2 family. In terms of assembly, homooligomer: homooligomerizes following muramyl dipeptide (MDP)-binding, promoting RIPK2 recruitment. Interacts (via CARD domain) with RIPK2 (via CARD domain). Following RIPK2 recruitment, RIPK2 homooligomerizes via its CARD domain and forms long filaments named RIPosomes. Interacts (via CARD domain) with ubiquitin; inhibiting interaction with RIPK2. Component of a signaling complex consisting of ARHGEF2, NOD2 and RIPK2. Interacts with ANKRD17 (via N-terminus). Interacts with HSPA1A; the interaction enhances NOD2 stability. Interacts (via both CARD domains) with HSP90; the interaction enhances NOD2 stability. Interacts (via CARD domain) with SOCS3; the interaction promotes NOD2 degradation. Interacts (via CARD domain) with ERBIN; the interaction inhibits activation of NOD2. Interacts with MAPKBP1; the interaction is enhanced in the presence of muramyl dipeptide (MDP) and inhibits NOD2 homooligomerization and activation. Interacts with INAVA; the interaction takes place upon Pattern recognition receptor (PRR) stimulation. Interacts (via NACHT domain) with CARD9. Interacts (via CARD domain) with CASP1; this interaction leads to IL1B processing. Also interacts with CASP4. Interacts with NLRP1; this interaction is enhanced in the presence of muramyl dipeptide (MDP) and leads to increased IL1B release. Interacts with NLRP12; this interaction promotes degradation of NOD2 through the ubiquitin-proteasome pathway. Interacts with ANKHD1, C10orf67, CHMP5, DOCK7, ENTR1, KRT15, LDOC1, PPP1R12C, PPP2R3B, TRIM41 and VIM. Interacts with MAVS; interaction takes place following single-stranded RNA (ssRNA)-binding. Interacts with ATG16L1. Interacts with IRGM; promoting IRGM 'Lys-63'-linked polyubiquitination, which is required for interactions with the core autophagy factors. Palmitoylated by ZDHHC5; palmitoylation is required for proper recruitment to the bacterial entry site and hence for proper signaling upon cognate peptidoglycan detection. Palmitoylation promotes localization to the cell membrane. Palmitoylation protects from SQSTM1/p62-dependent autophagic degradation. In terms of processing, polyubiquitinated by TRIM27, leading to proteasome-mediated degradation. Polyubiquitinated and degraded following muramyl dipeptide (MDP) stimulation, conferring MDP tolerance and preventing septic shock. Post-translationally, degraded via selective autophagy following interaction with IRGM. IRGM promotes NOD2-RIPK2 RIPosome recruitment to autophagosome membranes, promoting their SQSTM1/p62-dependent autophagic degradation. O-glycosylated by OGT, O-GlcNAcylation increases protein stability.

Its subcellular location is the cell membrane. The protein resides in the basolateral cell membrane. It is found in the cytoplasm. It localises to the mitochondrion. With respect to regulation, ADP-binding promotes an inactive closed conformation. Its function is as follows. Pattern recognition receptor (PRR) that detects bacterial peptidoglycan fragments and other danger signals and plays an important role in gastrointestinal immunity. Specifically activated by muramyl dipeptide (MDP), a fragment of bacterial peptidoglycan found in every bacterial peptidoglycan type. NOD2 specifically recognizes and binds 6-O-phospho-MDP, the phosphorylated form of MDP, which is generated by NAGK. 6-O-phospho-MDP-binding triggers oligomerization that facilitates the binding and subsequent activation of the proximal adapter receptor-interacting RIPK2. Following recruitment, RIPK2 undergoes 'Met-1'- (linear) and 'Lys-63'-linked polyubiquitination by E3 ubiquitin-protein ligases XIAP, BIRC2, BIRC3 and the LUBAC complex, becoming a scaffolding protein for downstream effectors, triggering activation of the NF-kappa-B and MAP kinases signaling. This in turn leads to the transcriptional activation of hundreds of genes involved in immune response. Its ability to detect bacterial MDP plays a central role in maintaining the equilibrium between intestinal microbiota and host immune responses to control inflammation. An imbalance in this relationship results in dysbiosis, whereby pathogenic bacteria prevail on commensals, causing damage in the intestinal epithelial barrier as well as allowing bacterial invasion and inflammation. Acts as a regulator of appetite by sensing MDP in a subset of brain neurons: microbiota-derived MDP reach the brain, where they bind and activate NOD2 in inhibitory hypothalamic neurons, decreasing neuronal activity, thereby regulating satiety and body temperature. NOD2-dependent MDP-sensing of bacterial cell walls in the intestinal epithelial compartment contributes to sustained postnatal growth upon undernutrition. Also plays a role in antiviral response by acting as a sensor of single-stranded RNA (ssRNA) from viruses: upon ssRNA-binding, interacts with MAVS, leading to activation of interferon regulatory factor-3/IRF3 and expression of type I interferon. Also acts as a regulator of autophagy in dendritic cells via its interaction with ATG16L1, possibly by recruiting ATG16L1 at the site of bacterial entry. NOD2 activation in the small intestine crypt also contributes to intestinal stem cells survival and function: acts by promoting mitophagy via its association with ATG16L1. In addition to its main role in innate immunity, also regulates the adaptive immune system by acting as regulator of helper T-cell and regulatory T-cells (Tregs). Besides recognizing pathogens, also involved in the endoplasmic reticulum stress response: acts by sensing and binding to the cytosolic metabolite sphingosine-1-phosphate generated in response to endoplasmic reticulum stress, initiating an inflammation process that leads to activation of the NF-kappa-B and MAP kinases signaling. May also be involved in NLRP1 activation following activation by MDP, leading to CASP1 activation and IL1B release in macrophages. This chain is Nucleotide-binding oligomerization domain-containing protein 2 (NOD2), found in Pan troglodytes (Chimpanzee).